Here is a 219-residue protein sequence, read N- to C-terminus: Lipoprotein-releasing system ATP-binding protein LolD (219 aa).

The ABC transporter domain occupies 5-219 (LKAGDIFKTY…KVVMQDGVII (215 aa)). 37–44 (GASGAGKS) is an ATP binding site.

It belongs to the ABC transporter superfamily. Lipoprotein translocase (TC 3.A.1.125) family. The complex is composed of two ATP-binding proteins (LolD) and two transmembrane proteins (LolC and LolE).

The protein localises to the cell inner membrane. In terms of biological role, part of the ABC transporter complex LolCDE involved in the translocation of mature outer membrane-directed lipoproteins, from the inner membrane to the periplasmic chaperone, LolA. Responsible for the formation of the LolA-lipoprotein complex in an ATP-dependent manner. This Cytophaga hutchinsonii (strain ATCC 33406 / DSM 1761 / CIP 103989 / NBRC 15051 / NCIMB 9469 / D465) protein is Lipoprotein-releasing system ATP-binding protein LolD.